Here is a 696-residue protein sequence, read N- to C-terminus: Putative zinc metalloproteinase YIL108W (696 aa).

Residue K245 forms a Glycyl lysine isopeptide (Lys-Gly) (interchain with G-Cter in ubiquitin) linkage. Residue H318 participates in Zn(2+) binding. Residue E319 is part of the active site. 2 residues coordinate Zn(2+): H322 and H328. S361 carries the phosphoserine modification. Glycyl lysine isopeptide (Lys-Gly) (interchain with G-Cter in ubiquitin) cross-links involve residues K478, K518, K579, K590, and K596. Residues 522-695 enclose the Jacalin-type lectin domain; the sequence is GIKSPLYGRS…VDAFGIIYGA (174 aa).

Belongs to the peptidase M10B family. Requires Zn(2+) as cofactor.

It is found in the cytoplasm. This is Putative zinc metalloproteinase YIL108W from Saccharomyces cerevisiae (strain ATCC 204508 / S288c) (Baker's yeast).